A 955-amino-acid chain; its full sequence is 2-oxoglutarate dehydrogenase E1 component (955 aa).

Belongs to the alpha-ketoglutarate dehydrogenase family. Homodimer. Part of the 2-oxoglutarate dehydrogenase (OGDH) complex composed of E1 (2-oxoglutarate dehydrogenase), E2 (dihydrolipoamide succinyltransferase) and E3 (dihydrolipoamide dehydrogenase); the complex contains multiple copies of the three enzymatic components (E1, E2 and E3). Requires thiamine diphosphate as cofactor.

The enzyme catalyses N(6)-[(R)-lipoyl]-L-lysyl-[protein] + 2-oxoglutarate + H(+) = N(6)-[(R)-S(8)-succinyldihydrolipoyl]-L-lysyl-[protein] + CO2. E1 component of the 2-oxoglutarate dehydrogenase (OGDH) complex which catalyzes the decarboxylation of 2-oxoglutarate, the first step in the conversion of 2-oxoglutarate to succinyl-CoA and CO(2). The protein is 2-oxoglutarate dehydrogenase E1 component of Bacillus cereus (strain G9842).